The primary structure comprises 552 residues: CTP synthase (552 aa).

Residues 1–265 (MTKYIFITGG…DEIVVRKLRL (265 aa)) are amidoligase domain. A CTP-binding site is contributed by Ser-13. Ser-13 contacts UTP. Residues 14-19 (SLGKGI) and Asp-71 contribute to the ATP site. The Mg(2+) site is built by Asp-71 and Glu-139. Residues 146–148 (DIE), 186–191 (KTKPTQ), and Lys-222 each bind CTP. UTP-binding positions include 186–191 (KTKPTQ) and Lys-222. Residues 290 to 541 (TVAMVGKYVN…VRAARARSEG (252 aa)) form the Glutamine amidotransferase type-1 domain. Gly-351 is an L-glutamine binding site. Cys-378 serves as the catalytic Nucleophile; for glutamine hydrolysis. Residues 379–382 (LGMQ), Glu-402, and Arg-469 contribute to the L-glutamine site. Catalysis depends on residues His-514 and Glu-516.

It belongs to the CTP synthase family. In terms of assembly, homotetramer.

It catalyses the reaction UTP + L-glutamine + ATP + H2O = CTP + L-glutamate + ADP + phosphate + 2 H(+). It carries out the reaction L-glutamine + H2O = L-glutamate + NH4(+). The catalysed reaction is UTP + NH4(+) + ATP = CTP + ADP + phosphate + 2 H(+). The protein operates within pyrimidine metabolism; CTP biosynthesis via de novo pathway; CTP from UDP: step 2/2. With respect to regulation, allosterically activated by GTP, when glutamine is the substrate; GTP has no effect on the reaction when ammonia is the substrate. The allosteric effector GTP functions by stabilizing the protein conformation that binds the tetrahedral intermediate(s) formed during glutamine hydrolysis. Inhibited by the product CTP, via allosteric rather than competitive inhibition. Catalyzes the ATP-dependent amination of UTP to CTP with either L-glutamine or ammonia as the source of nitrogen. Regulates intracellular CTP levels through interactions with the four ribonucleotide triphosphates. In Methylococcus capsulatus (strain ATCC 33009 / NCIMB 11132 / Bath), this protein is CTP synthase.